The primary structure comprises 248 residues: MSEGDLFLISFLKVGFASLGLNEQLINNIKRYGITKLTPFQMEVIKEIKENSNVIVDSIEGTGRTISLIIGTLDKIDETKQQQEQEQQERQQTDQQFSFPQILMILPTKELSQTTKVIYSSLGGGENNNNDFKVLSCIGGVKISMDIEILKKGNTQILLGTPGRISDLFSRKRFDTDNIKILVFDELDEILSRGFECQLEDIIKPLNNNNNLQIIVSTSGINELTSNFINTFIKIPKIIKSQQEPYKF.

A Q motif motif is present at residues 14-42 (VGFASLGLNEQLINNIKRYGITKLTPFQM). One can recognise a Helicase ATP-binding domain in the interval 45–239 (IKEIKENSNV…NTFIKIPKII (195 aa)). 58-65 (SIEGTGRT) contacts ATP. Positions 185–188 (DELD) match the DEAD box motif.

It belongs to the DEAD box helicase family. eIF4A subfamily.

This Dictyostelium discoideum (Social amoeba) protein is Putative eukaryotic initiation factor 4A-like protein.